The primary structure comprises 298 residues: Probable GTP 3',8-cyclase (298 aa).

The Radical SAM core domain occupies 4 to 227 (RYGREIRSFR…MQNRKKYLID (224 aa)). GTP is bound at residue R13. 2 residues coordinate [4Fe-4S] cluster: C20 and C24. Y26 is a binding site for S-adenosyl-L-methionine. Position 27 (C27) interacts with [4Fe-4S] cluster. A GTP-binding site is contributed by K61. G65 lines the S-adenosyl-L-methionine pocket. T91 is a GTP binding site. Residue S115 participates in S-adenosyl-L-methionine binding. Residue K152 coordinates GTP. Residues C243 and C246 each contribute to the [4Fe-4S] cluster site. Residue 248-250 (RIR) participates in GTP binding. C260 lines the [4Fe-4S] cluster pocket.

Belongs to the radical SAM superfamily. MoaA family. Requires [4Fe-4S] cluster as cofactor.

It catalyses the reaction GTP + AH2 + S-adenosyl-L-methionine = (8S)-3',8-cyclo-7,8-dihydroguanosine 5'-triphosphate + 5'-deoxyadenosine + L-methionine + A + H(+). It functions in the pathway cofactor biosynthesis; molybdopterin biosynthesis. Functionally, catalyzes the cyclization of GTP to (8S)-3',8-cyclo-7,8-dihydroguanosine 5'-triphosphate. This chain is Probable GTP 3',8-cyclase, found in Methanococcus maripaludis (strain C5 / ATCC BAA-1333).